The primary structure comprises 292 residues: Bifunctional protein FolD (292 aa).

NADP(+)-binding positions include 161–163 and isoleucine 231; that span reads GRS.

The protein belongs to the tetrahydrofolate dehydrogenase/cyclohydrolase family. In terms of assembly, homodimer.

It carries out the reaction (6R)-5,10-methylene-5,6,7,8-tetrahydrofolate + NADP(+) = (6R)-5,10-methenyltetrahydrofolate + NADPH. The catalysed reaction is (6R)-5,10-methenyltetrahydrofolate + H2O = (6R)-10-formyltetrahydrofolate + H(+). It participates in one-carbon metabolism; tetrahydrofolate interconversion. Its function is as follows. Catalyzes the oxidation of 5,10-methylenetetrahydrofolate to 5,10-methenyltetrahydrofolate and then the hydrolysis of 5,10-methenyltetrahydrofolate to 10-formyltetrahydrofolate. This chain is Bifunctional protein FolD, found in Protochlamydia amoebophila (strain UWE25).